The following is a 185-amino-acid chain: Ribosome-recycling factor (185 aa).

It belongs to the RRF family.

The protein localises to the cytoplasm. Functionally, responsible for the release of ribosomes from messenger RNA at the termination of protein biosynthesis. May increase the efficiency of translation by recycling ribosomes from one round of translation to another. The polypeptide is Ribosome-recycling factor (Vibrio campbellii (strain ATCC BAA-1116)).